Here is a 365-residue protein sequence, read N- to C-terminus: Protein mab-21 (365 aa).

This sequence belongs to the mab-21 family.

The protein is Protein mab-21 (mab-21) of Anopheles gambiae (African malaria mosquito).